A 148-amino-acid chain; its full sequence is Cell division protein SepF (148 aa).

This sequence belongs to the SepF family. As to quaternary structure, homodimer. Interacts with FtsZ.

The protein resides in the cytoplasm. Functionally, cell division protein that is part of the divisome complex and is recruited early to the Z-ring. Probably stimulates Z-ring formation, perhaps through the cross-linking of FtsZ protofilaments. Its function overlaps with FtsA. The sequence is that of Cell division protein SepF from Alkaliphilus metalliredigens (strain QYMF).